The following is a 271-amino-acid chain: Aquaporin-1 (271 aa).

At 1-11 (MASEFKKKLFW) the chain is on the cytoplasmic side. Residues 12–29 (RAVVAEFLAMILFIFISI) form a helical membrane-spanning segment. Residues 30-48 (GSALGFHYPIKSNQTTGAV) are Extracellular-facing. Residue Asn-42 is glycosylated (N-linked (GlcNAc...) asparagine). A helical transmembrane segment spans residues 49–67 (QDNVKVSLAFGLSIATLAQ). The Cytoplasmic portion of the chain corresponds to 68-70 (SVG). An intramembrane segment occupies 71-84 (HISGAHLNPAVTLG). The NPA 1 signature appears at 78–80 (NPA). The Cytoplasmic segment spans residues 85-92 (LLLSCQIS). The helical transmembrane segment at 93–111 (VLRAIMYIIAQCVGAIVAT) threads the bilayer. Topologically, residues 112–135 (AILSGITSSLPDNSLGLNALAPGV) are extracellular. The chain crosses the membrane as a helical span at residues 136-155 (NSGQGLGIEIIGTLQLVLCV). Topologically, residues 156 to 165 (LATTDRRRRD) are cytoplasmic. The chain crosses the membrane as a helical span at residues 166–183 (LGGSGPLAIGFSVALGHL). Topologically, residues 184 to 188 (LAIDY) are extracellular. Residues 189 to 201 (TGCGINPARSFGS) lie within the membrane without spanning it. Positions 194-196 (NPA) match the NPA 2 motif. Over 202–208 (SVITHNF) the chain is Extracellular. Residues 209-226 (QDHWIFWVGPFIGAALAV) form a helical membrane-spanning segment. Over 227–271 (LIYDFILAPRSSDLTDRVKVWTSGQVEEYDLDADDINSRVEMKPK) the chain is Cytoplasmic. Ser-249 carries the post-translational modification Phosphoserine. Phosphotyrosine is present on Tyr-255. Ser-264 is subject to Phosphoserine.

This sequence belongs to the MIP/aquaporin (TC 1.A.8) family. In terms of assembly, homotetramer; each monomer provides an independent water pore. Component of the ankyrin-1 complex in the erythrocyte, composed of ANK1, RHCE, RHAG, SLC4A1, EPB42, GYPA, GYPB and AQP1. Interacts with EPHB2; involved in endolymph production in the inner ear. Identified in a complex with STOM. Interacts (via the N-terminal) with ANK1 (via ANK 1-5 repeats). Interacts (via the C-terminal) with EPB42.

It is found in the cell membrane. The catalysed reaction is H2O(in) = H2O(out). It carries out the reaction nitric oxide(out) = nitric oxide(in). It catalyses the reaction CO2(out) = CO2(in). The enzyme catalyses glycerol(in) = glycerol(out). The catalysed reaction is H2O2(out) = H2O2(in). It carries out the reaction K(+)(in) = K(+)(out). It catalyses the reaction Na(+)(in) = Na(+)(out). Functionally, forms a water channel that facilitates the transport of water across cell membranes, playing a crucial role in water homeostasis in various tissues. Could also be permeable to small solutes including hydrogen peroxide, glycerol and gases such as amonnia (NH3), nitric oxide (NO) and carbon dioxide (CO2). Recruited to the ankyrin-1 complex, a multiprotein complex of the erythrocyte membrane, it could be part of a CO2 metabolon, linking facilitated diffusion of CO2 across the membrane, anion exchange of Cl(-)/HCO3(-) and interconversion of dissolved CO2 and carbonic acid in the cytosol. In vitro, it shows non-selective gated cation channel activity and may be permeable to cations like K(+) and Na(+) in vivo. This is Aquaporin-1 from Bos taurus (Bovine).